Consider the following 77-residue polypeptide: U8-lycotoxin-Ls1m (77 aa).

The signal sequence occupies residues 1 to 20 (MKLIIFTGLVLFSIVSLIEA). Positions 21–26 (QAENEK) are excised as a propeptide.

It belongs to the neurotoxin 19 (CSTX) family. 08 (U8-Lctx) subfamily. Contains 4 disulfide bonds. As to expression, expressed by the venom gland.

The protein localises to the secreted. The polypeptide is U8-lycotoxin-Ls1m (Lycosa singoriensis (Wolf spider)).